The following is a 675-amino-acid chain: Serine/threonine-protein kinase ATG1 (675 aa).

The Protein kinase domain occupies 25–328 (FVIGGEIGKG…FEDFFNDPVV (304 aa)). Residues 31–39 (IGKGSFAQV) and lysine 54 contribute to the ATP site. The active-site Proton acceptor is the aspartate 168. Residues 339–374 (DIPKVEQKPSRDLRSLEADPQREQSELAKSPRERPL) are compositionally biased toward basic and acidic residues. Disordered stretches follow at residues 339–455 (DIPK…ERKL) and 501–577 (RLTS…TTRS). Composition is skewed to polar residues over residues 390–399 (ANVSARTGQS), 516–538 (ATQQGPPTSTTGAGRMQPSSAVQ), and 556–565 (ASRSLNTSSA).

This sequence belongs to the protein kinase superfamily. Ser/Thr protein kinase family. APG1/unc-51/ULK1 subfamily. In terms of assembly, homodimer. Forms a ternary complex with ATG13 and ATG17.

The protein resides in the cytoplasm. The protein localises to the preautophagosomal structure membrane. The catalysed reaction is L-seryl-[protein] + ATP = O-phospho-L-seryl-[protein] + ADP + H(+). It catalyses the reaction L-threonyl-[protein] + ATP = O-phospho-L-threonyl-[protein] + ADP + H(+). In terms of biological role, serine/threonine protein kinase involved in the cytoplasm to vacuole transport (Cvt) and found to be essential in autophagy, where it is required for the formation of autophagosomes. Involved in the clearance of protein aggregates which cannot be efficiently cleared by the proteasome. Required for selective autophagic degradation of the nucleus (nucleophagy) as well as for mitophagy which contributes to regulate mitochondrial quantity and quality by eliminating the mitochondria to a basal level to fulfill cellular energy requirements and preventing excess ROS production. Also involved in endoplasmic reticulum-specific autophagic process, in selective removal of ER-associated degradation (ERAD) substrates. Plays a key role in ATG9 and ATG23 cycling through the pre-autophagosomal structure and is necessary to promote ATG18 binding to ATG9 through phosphorylation of ATG9. Catalyzes phosphorylation of ATG4, decreasing the interaction between ATG4 and ATG8 and impairing deconjugation of PE-conjugated forms of ATG8. The protein is Serine/threonine-protein kinase ATG1 of Colletotrichum lindemuthianum (Bean anthracnose fungus).